The following is a 227-amino-acid chain: Killer cell lectin-like receptor subfamily B member 1A (227 aa).

At 1–45 the chain is on the cytoplasmic side; the sequence is MDTARVYFGLKPPRTPGAWHESPPSLPPDACRCPRSHRLALKLSC. An LCK-binding motif motif is present at residues 31–34; it reads CRCP. A helical; Signal-anchor for type II membrane protein transmembrane segment spans residues 46-66; that stretch reads AGLILLVVTLIGMSVLVRVLI. The Extracellular segment spans residues 67–227; the sequence is QKPSIEKCYV…TLSNYVGYGH (161 aa). Residues 93–212 form the C-type lectin domain; the sequence is ECPQDWLSHR…NSDNRWICQK (120 aa). 3 disulfide bridges follow: Cys-94-Cys-105, Cys-122-Cys-210, and Cys-189-Cys-202.

As to quaternary structure, homodimer; disulfide-linked. Interacts with tyrosine kinase LCK. In terms of tissue distribution, expressed in natural killer cells.

It localises to the membrane. Plays a stimulatory role on natural killer (NK) cell cytotoxicity. This Mus musculus (Mouse) protein is Killer cell lectin-like receptor subfamily B member 1A (Klrb1a).